The primary structure comprises 458 residues: Morphogenetic regulator of filamentous growth protein 1 (458 aa).

The interval 401–458 (KKDSGSEPLHAKRRRNSGISPRTTTLGPNGNSNTSNEELPTSDVNDINKDMTKKKMKF) is disordered. Residues 417–445 (SGISPRTTTLGPNGNSNTSNEELPTSDVN) show a composition bias toward polar residues. Residues 446–458 (DINKDMTKKKMKF) show a composition bias toward basic and acidic residues.

Belongs to the MFG1 family. As to quaternary structure, interacts with FLO8 and MSS11, both morphogenetic transcription factors binding directly to the FLO11 promoter.

The protein resides in the nucleus. In terms of biological role, transcriptional regulator with a general role in all morphogenetically distinct forms of filamentous growth, namely haploid invasive growth, biofilm formation, and diploid pseudohyphal growth. May control FLO11 gene expression as part of a promoter-bound complex with FLO8 and MSS1. This chain is Morphogenetic regulator of filamentous growth protein 1 (MFG1), found in Saccharomyces cerevisiae (strain ATCC 204508 / S288c) (Baker's yeast).